A 288-amino-acid chain; its full sequence is Sulfur carrier protein FdhD (288 aa).

The active-site Cysteine persulfide intermediate is C122. Position 268–273 (268–273) interacts with Mo-bis(molybdopterin guanine dinucleotide); the sequence is FVRGER.

It belongs to the FdhD family.

The protein resides in the cytoplasm. Required for formate dehydrogenase (FDH) activity. Acts as a sulfur carrier protein that transfers sulfur from IscS to the molybdenum cofactor prior to its insertion into FDH. This is Sulfur carrier protein FdhD from Anaeromyxobacter dehalogenans (strain 2CP-C).